The chain runs to 206 residues: Large ribosomal subunit protein uL4 (206 aa).

The protein belongs to the universal ribosomal protein uL4 family. As to quaternary structure, part of the 50S ribosomal subunit.

Functionally, one of the primary rRNA binding proteins, this protein initially binds near the 5'-end of the 23S rRNA. It is important during the early stages of 50S assembly. It makes multiple contacts with different domains of the 23S rRNA in the assembled 50S subunit and ribosome. In terms of biological role, forms part of the polypeptide exit tunnel. This is Large ribosomal subunit protein uL4 from Rhodopseudomonas palustris (strain ATCC BAA-98 / CGA009).